The primary structure comprises 1203 residues: DNA-directed RNA polymerase subunit beta' (1203 aa).

Zn(2+) is bound by residues C60, C62, C75, and C78. Mg(2+) is bound by residues D449, D451, and D453. Zn(2+) is bound by residues C818, C892, C899, and C902.

This sequence belongs to the RNA polymerase beta' chain family. In terms of assembly, the RNAP catalytic core consists of 2 alpha, 1 beta, 1 beta' and 1 omega subunit. When a sigma factor is associated with the core the holoenzyme is formed, which can initiate transcription. The cofactor is Mg(2+). It depends on Zn(2+) as a cofactor.

It carries out the reaction RNA(n) + a ribonucleoside 5'-triphosphate = RNA(n+1) + diphosphate. Functionally, DNA-dependent RNA polymerase catalyzes the transcription of DNA into RNA using the four ribonucleoside triphosphates as substrates. This Bacillus mycoides (strain KBAB4) (Bacillus weihenstephanensis) protein is DNA-directed RNA polymerase subunit beta'.